Here is a 667-residue protein sequence, read N- to C-terminus: Beta-galactosidase LacA (667 aa).

Arginine 109 contacts substrate. Cysteine 113 provides a ligand contact to Zn(2+). Residue asparagine 147 coordinates substrate. The active-site Proton donor is the glutamate 148. The Zn(2+) site is built by cysteine 153, cysteine 155, and cysteine 158. Glutamate 307 serves as the catalytic Nucleophile. Residues tryptophan 315 and 355–358 (EKFH) each bind substrate.

This sequence belongs to the glycosyl hydrolase 42 family.

The catalysed reaction is Hydrolysis of terminal non-reducing beta-D-galactose residues in beta-D-galactosides.. In terms of biological role, hydrolyzes lactose, oNP-galactoside (oNPG), pNP-galactosidase (pNPG), pNP-mannoside, pNP-glucoside, pNP-fucoside, pNP-N-acetylglucosamide, but not pNP-arabinoside or 4-methylumbelliferyl-beta-galactopyranoside (MUG). Transgalactosylates lactose at 10 g/L, but not at 270 g/L. This chain is Beta-galactosidase LacA, found in Lactobacillus acidophilus.